The sequence spans 280 residues: Phosphatidylserine decarboxylase proenzyme (280 aa).

Catalysis depends on charge relay system; for autoendoproteolytic cleavage activity residues D86, H143, and S246. Residue S246 is the Schiff-base intermediate with substrate; via pyruvic acid; for decarboxylase activity of the active site. S246 carries the post-translational modification Pyruvic acid (Ser); by autocatalysis.

This sequence belongs to the phosphatidylserine decarboxylase family. PSD-B subfamily. Prokaryotic type I sub-subfamily. As to quaternary structure, heterodimer of a large membrane-associated beta subunit and a small pyruvoyl-containing alpha subunit. It depends on pyruvate as a cofactor. Is synthesized initially as an inactive proenzyme. Formation of the active enzyme involves a self-maturation process in which the active site pyruvoyl group is generated from an internal serine residue via an autocatalytic post-translational modification. Two non-identical subunits are generated from the proenzyme in this reaction, and the pyruvate is formed at the N-terminus of the alpha chain, which is derived from the carboxyl end of the proenzyme. The autoendoproteolytic cleavage occurs by a canonical serine protease mechanism, in which the side chain hydroxyl group of the serine supplies its oxygen atom to form the C-terminus of the beta chain, while the remainder of the serine residue undergoes an oxidative deamination to produce ammonia and the pyruvoyl prosthetic group on the alpha chain. During this reaction, the Ser that is part of the protease active site of the proenzyme becomes the pyruvoyl prosthetic group, which constitutes an essential element of the active site of the mature decarboxylase.

It localises to the cell membrane. The catalysed reaction is a 1,2-diacyl-sn-glycero-3-phospho-L-serine + H(+) = a 1,2-diacyl-sn-glycero-3-phosphoethanolamine + CO2. It functions in the pathway phospholipid metabolism; phosphatidylethanolamine biosynthesis; phosphatidylethanolamine from CDP-diacylglycerol: step 2/2. Catalyzes the formation of phosphatidylethanolamine (PtdEtn) from phosphatidylserine (PtdSer). This is Phosphatidylserine decarboxylase proenzyme from Brevibacillus brevis (strain 47 / JCM 6285 / NBRC 100599).